The primary structure comprises 158 residues: Succinate dehydrogenase [ubiquinone] cytochrome b small subunit, mitochondrial (158 aa).

The transit peptide at 1-55 (MALWRLSVLCGAREGRALFLRTPVVRPALVSAFLQDRPAQGWCGTQHIHLSPSHH) directs the protein to the mitochondrion. Over 56-62 (SGSKAAS) the chain is Mitochondrial matrix. The chain crosses the membrane as a helical span at residues 63 to 84 (LHWTGERVVSVLLLGLIPAAYL). Topologically, residues 85 to 89 (NPCSA) are mitochondrial intermembrane. A helical membrane pass occupies residues 90–110 (MDYSLAATLTLHSHWGIGQVV). H101 is a heme b binding site. Residues 111–119 (TDYVHGDAV) are Mitochondrial matrix-facing. Residue Y113 coordinates a ubiquinone. Residues 120 to 141 (QKAAKTGLLVLSAFTFAGLCYF) traverse the membrane as a helical segment. Topologically, residues 142-158 (NYHDVGICKAVAMLWKL) are mitochondrial intermembrane.

It belongs to the CybS family. Component of complex II composed of four subunits: the flavoprotein (FP) SDHA, iron-sulfur protein (IP) SDHB, and a cytochrome b560 composed of SDHC and SDHD.

It localises to the mitochondrion inner membrane. It participates in carbohydrate metabolism; tricarboxylic acid cycle. Functionally, membrane-anchoring subunit of succinate dehydrogenase (SDH) that is involved in complex II of the mitochondrial electron transport chain and is responsible for transferring electrons from succinate to ubiquinone (coenzyme Q). SDH also oxidizes malate to the non-canonical enol form of oxaloacetate, enol-oxaloacetate. Enol-oxaloacetate, which is a potent inhibitor of the succinate dehydrogenase activity, is further isomerized into keto-oxaloacetate. This Bos taurus (Bovine) protein is Succinate dehydrogenase [ubiquinone] cytochrome b small subunit, mitochondrial (SDHD).